A 1043-amino-acid polypeptide reads, in one-letter code: Chitin synthase 2 (1043 aa).

Residues 1–10 (MAQESSNMDQ) show a composition bias toward polar residues. Disordered regions lie at residues 1–133 (MAQE…PRRP) and 215–234 (ESDFNVHYGPAPTGRQERRG). A compositionally biased stretch (basic and acidic residues) spans 11 to 21 (SKSDNVTDNKP). Residues 43–58 (SASTSSLPTSRPSSSP) show a composition bias toward low complexity. Polar residues-rich tracts occupy residues 59-73 (GQSPNITPSILTSDT) and 81-93 (VSPTRPWTPSRGS). Transmembrane regions (helical) follow at residues 663–683 (FVSLAFTFFSLANFYLTFYFI), 703–723 (IFAILRYTCVLLICLQFVLSM), 738–758 (MIIYCIIMMYTVFSALYMVVM), 780–800 (YIIVSTLSTVGLYFFMSFLYL), 907–927 (YMVSVWFIANAILAMAVSEAF), and 931–951 (SVGNNAYLAFVLWSVASLAVF).

This sequence belongs to the chitin synthase family. Class II subfamily.

Its subcellular location is the cell membrane. It catalyses the reaction [(1-&gt;4)-N-acetyl-beta-D-glucosaminyl](n) + UDP-N-acetyl-alpha-D-glucosamine = [(1-&gt;4)-N-acetyl-beta-D-glucosaminyl](n+1) + UDP + H(+). In terms of biological role, polymerizes chitin, a structural polymer of the cell wall and septum, by transferring the sugar moiety of UDP-GlcNAc to the non-reducing end of the growing chitin polymer. This is Chitin synthase 2 (CHS2) from Paracoccidioides brasiliensis.